The sequence spans 1513 residues: Mucin-2 (1513 aa).

Residues 1 to 20 (MGLPLARLVAVCLVLALAKG) form the signal peptide. The VWFD 1 domain maps to 32–204 (HVCSTWGDFH…KINKPEVVCE (173 aa)). 28 cysteine pairs are disulfide-bonded: Cys-34–Cys-166, Cys-56–Cys-203, Cys-64–Cys-163, Cys-215–Cys-252, Cys-222–Cys-247, Cys-234–Cys-272, Cys-254–Cys-260, Cys-262–Cys-288, Cys-292–Cys-326, Cys-309–Cys-348, Cys-328–Cys-342, Cys-350–Cys-372, Cys-367–Cys-384, Cys-370–Cys-379, Cys-388–Cys-525, Cys-410–Cys-560, Cys-432–Cys-440, Cys-571–Cys-616, Cys-585–Cys-611, Cys-598–Cys-636, Cys-618–Cys-624, Cys-626–Cys-651, Cys-658–Cys-695, Cys-671–Cys-685, Cys-675–Cys-715, Cys-697–Cys-709, Cys-717–Cys-739, and Cys-737–Cys-746. Asp-46 provides a ligand contact to Ca(2+). Cu(+)-binding residues include Met-143 and Met-151. A Cu(2+)-binding site is contributed by Glu-153. A glycan (N-linked (GlcNAc...) asparagine) is linked at Asn-160. Residues Asp-168, Asn-170, and Glu-177 each contribute to the Ca(2+) site. Residues His-274 and His-321 each contribute to the Cu(2+) site. In terms of domain architecture, TIL spans 292 to 348 (CPGNMVYLESGSPWLDTCSHLEVSSLCEEHYMDGCFCPEGTVYDDITGSGCIPVSQC). Position 323 (Met-323) interacts with Cu(+). Positions 350 to 410 (CKLHGHLYMP…GKKFTFHGDC (61 aa)) constitute a VWFC domain. One can recognise a VWFD 2 domain in the interval 386 to 561 (ETCALEGGSH…NTWKAQSSCH (176 aa)). Asp-400 provides a ligand contact to Ca(2+). An N-linked (GlcNAc...) asparagine glycan is attached at Asn-420. Positions 527, 529, 531, 534, and 535 each coordinate Ca(2+). The N-linked (GlcNAc...) asparagine glycan is linked to Asn-667. Residue Asn-767 is glycosylated (N-linked (GlcNAc...) asparagine). 21 disulfides stabilise this stretch: Cys-781-Cys-817, Cys-799-Cys-811, Cys-819-Cys-842, Cys-836-Cys-854, Cys-840-Cys-849, Cys-858-Cys-989, Cys-880-Cys-1024, Cys-889-Cys-986, Cys-906-Cys-913, Cys-1034-Cys-1077, Cys-1048-Cys-1072, Cys-1059-Cys-1099, Cys-1079-Cys-1087, Cys-1089-Cys-1114, Cys-1105-Cys-1134, Cys-1118-Cys-1160, Cys-1142-Cys-1184, Cys-1164-Cys-1178, Cys-1186-Cys-1210, Cys-1205-Cys-1235, and Cys-1208-Cys-1218. An N-linked (GlcNAc...) asparagine glycan is attached at Asn-837. In terms of domain architecture, VWFD 3 spans 856 to 1025 (STCSIYGSGH…NSWKEASTCP (170 aa)). Asp-870 is a Ca(2+) binding site. N-linked (GlcNAc...) asparagine glycosylation occurs at Asn-892. The Ca(2+) site is built by Asn-991, Asp-993, Asn-998, and Asp-999. N-linked (GlcNAc...) asparagine glycosylation is found at Asn-1136 and Asn-1151. N-linked (GlcNAc...) asparagine glycans are attached at residues Asn-1212, Asn-1227, and Asn-1243. 4 O-linked (GalNAc) threonine glycosylation sites follow: Thr-1264, Thr-1267, Thr-1268, and Thr-1280. O-linked (GalNAc) serine glycosylation is present at Ser-1286. An O-linked (GalNAc) threonine glycan is attached at Thr-1290. Ca(2+)-binding residues include Asn-1303, His-1306, Ser-1309, Gly-1313, Asp-1314, and Glu-1316. Asn-1350 is a glycosylation site (N-linked (GlcNAc...) asparagine). Ca(2+) contacts are provided by Asp-1373 and Tyr-1374. 11 consecutive repeat copies span residues 1392–1407 (SPTT…QPTS), 1408–1423 (SPTT…SSAT), 1424–1434 (SPTTSHITSTV), 1435–1445 (SPTTSPTTSTT), 1446–1456 (SPTTSPTTSTT), 1457–1467 (SPTTSTTSPTP), 1468–1478 (SPTTSTTSPTP), 1479–1489 (SPTTSTTSPTP), 1490–1500 (SPTTSTTSPTT), 1501–1511 (SPITSPTTSTT), and 1512–1513 (SP). An approximate repeats region spans residues 1392 to 1513 (SPTTSTPISS…TSPTTSTTSP (122 aa)). A disordered region spans residues 1392–1513 (SPTTSTPISS…TSPTTSTTSP (122 aa)).

In terms of assembly, homomultimer; disulfide-linked. The N- and C-terminus mediate their assembly into higher order structures to form filaments. The CTCK domains of two polypeptides associate in the endoplasmic reticulum to generate intermolecularly disulfide-bonded dimers. These dimers progress to the Golgi apparatus, which is a more acidic environment than the endoplasmic reticulum. Under acidic conditions, the N-termini form non-covalent intermolecular interactions that juxtapose assemblies of the third VWD domain (VWD3) from different CTCK-linked dimers. The VWD3 assemblies then become disulfide bonded to one another to produce long, disulfide-linked polymers that remain highly compact until secretion. Interacts with FCGBP. Interacts with AGR2; disulfide-linked. In terms of processing, O-glycosylated. O-glycosylation is required for mucin assembly. Goblet cells synthesize two forms of mucin that differ in branched chain O-glycosylation and the site of production in the colon. May undergo proteolytic cleavage in the outer mucus layer of the colon, contributing to the expanded volume and loose nature of this layer which allows for bacterial colonization in contrast to the inner mucus layer which is dense and devoid of bacteria. Post-translationally, at low pH of 6 and under, undergoes autocatalytic cleavage in vitro in the N-terminal region of the fourth VWD domain. It is likely that this also occurs in vivo and is triggered by the low pH of the late secretory pathway. Expressed in intestine and airway.

It localises to the secreted. Coats the epithelia of the intestines and other mucus membrane-containing organs to provide a protective, lubricating barrier against particles and infectious agents at mucosal surfaces. Major constituent of the colon mucus, which is mainly formed by large polymeric networks of MUC2 secreted by goblet cells that cover the exposed surfaces of intestine. MUC2 networks form hydrogels that guard the underlying epithelium from pathogens and other hazardous matter entering from the outside world, while permitting nutrient absorption and gas exchange. Acts as a divalent copper chaperone that protects intestinal cells from copper toxicity and facilitates nutritional copper unptake into cells. Binds both Cu(2+) and its reduced form, Cu(1+), at two juxtaposed binding sites: Cu(2+), once reduced to Cu(1+) by vitamin C (ascorbate) or other dietary antioxidants, transits to the other binding site. MUC2-bound Cu(1+) is protected from oxidation in aerobic environments, and can be released for nutritional delivery to cells. Mucin gels store antimicrobial molecules that participate in innate immunity. Mucin glycoproteins also house and feed the microbiome, lubricate tissue surfaces, and may facilitate the removal of contaminants and waste products from the body. Goblet cells synthesize two forms of MUC2 mucin that differ in branched chain O-glycosylation and the site of production in the colon: a (1) 'thick' mucus that wraps the microbiota to form fecal pellets is produced in the proximal, ascending colon. 'Thick' mucus transits along the descending colon and is lubricated by a (2) 'thin' MUC2 mucus produced in the distal colon which adheres to the 'thick' mucus. The polypeptide is Mucin-2 (Rattus norvegicus (Rat)).